Here is a 129-residue protein sequence, read N- to C-terminus: Small ribosomal subunit protein uS11c (129 aa).

It belongs to the universal ribosomal protein uS11 family. As to quaternary structure, part of the 30S ribosomal subunit.

The protein resides in the plastid. The protein localises to the chloroplast. The protein is Small ribosomal subunit protein uS11c of Euglena gracilis.